Consider the following 1151-residue polypeptide: MLRRVTVAAVCATRRKLCEAGRELAALWGIETRGRCEDSAAARPFPILAMPGRNKAKSTCSCPDLQPNGQDLGENSRVARLGADESEEEGRRGSLSNAGDPEIVKSPSDPKQYRYIKLQNGLQALLISDLSNMEGKTGNTTDDEEEEEVEEEEEDDDEDSGAEIEDDDEEGFDDEDEFDDEHDDDLDTEDNELEELEERAEARKKTTEKQSAAALCVGVGSFADPDDLPGLAHFLEHMVFMGSLKYPDENGFDAFLKKHGGSDNASTDCERTVFQFDVQRKYFKEALDRWAQFFIHPLMIRDAIDREVEAVDSEYQLARPSDANRKEMLFGSLARPGHPMGKFFWGNAETLKHEPRKNNIDTHARLREFWMRYYSSHYMTLVVQSKETLDTLEKWVTEIFSQIPNNGLPRPNFGHLTDPFDTPAFNKLYRVVPIRKIHALTITWALPPQQQHYRVKPLHYISWLVGHEGKGSILSFLRKKCWALALFGGNGETGFEQNSTYSVFSISITLTDEGYEHFYEVAYTVFQYLKMLQKLGPEKRIFEEIRKIEDNEFHYQEQTDPVEYVENMCENMQLYPLQDILTGDQLLFEYKPEVIGEALNQLVPQKANLVLLSGANEGKCDLKEKWFGTQYSIEDIENSWAELWNSNFELNPDLHLPAENKYIATDFTLKAFDCPETEYPVKIVNTPQGCLWYKKDNKFKIPKAYIRFHLISPLIQKSAANVVLFDIFVNILTHNLAEPAYEADVAQLEYKLVAGEHGLIIRVKGFNHKLPLLFQLIIDYLAEFNSTPAVFTMITEQLKKTYFNILIKPETLAKDVRLLILEYARWSMIDKYQALMDGLSLESLLSFVKEFKSQLFVEGLVQGNVTSTESMDFLKYVVDKLNFKPLEQEMPVQFQVVELPSGHHLCKVKALNKGDANSEVTVYYQSGTRSLREYTLMELLVMHMEEPCFDFLRTKQTLGYHVYPTCRNTSGILGFSVTVGTQATKYNSEVVDKKIEEFLSSFEEKIENLTEEAFNTQVTALIKLKECEDTHLGEEVDRNWNEVVTQQYLFDRLAHEIEALKSFSKSDLVNWFKAHRGPGSKMLSVHVVGYGKYELEEDGTPSSEDSNSSCEVMQLTYLPTSPLLADCIIPITDIRAFTTTLNLLPYHKIVK.

Residues 1–20 form the signal peptide; sequence MLRRVTVAAVCATRRKLCEA. 2 disordered regions span residues 53 to 108 and 133 to 207; these read RNKA…KSPS and MEGK…KKTT. Ser-86, Ser-94, and Ser-96 each carry phosphoserine. A compositionally biased stretch (acidic residues) spans 141–198; the sequence is TDDEEEEEVEEEEEDDDEDSGAEIEDDDEEGFDDEDEFDDEHDDDLDTEDNELEELEE. Residue His-233 coordinates Zn(2+). The Proton acceptor role is filled by Glu-236. Zn(2+) contacts are provided by His-237 and Glu-314.

This sequence belongs to the peptidase M16 family. In terms of assembly, interacts with BACE1 and NRG1. The cofactor is Zn(2+). As to expression, primarily in adult heart, skeletal muscle, and testis and at much lower levels in other tissues.

It is found in the mitochondrion. The protein localises to the cell projection. It localises to the dendrite. It catalyses the reaction Hydrolysis of polypeptides, preferably at -Xaa-|-Arg-Lys-, and less commonly at -Arg-|-Arg-Xaa-, in which Xaa is not Arg or Lys.. Its function is as follows. Cleaves peptide substrates on the N-terminus of arginine residues in dibasic pairs. Is a critical activator of BACE1- and ADAM17-mediated pro-neuregulin ectodomain shedding, involved in the positive regulation of axonal maturation and myelination. Required for proper functioning of 2-oxoglutarate dehydrogenase (OGDH). The chain is Nardilysin from Homo sapiens (Human).